The primary structure comprises 226 residues: Beta-casein (226 aa).

An N-terminal signal peptide occupies residues 1–15 (MKVLILACLVALALA). A Phosphothreonine; in form 5-P modification is found at threonine 18. Serine 21 bears the Phosphoserine; in form 4-P and form 5-P mark. Serine 23 is subject to Phosphoserine; in form 3-P, form 4-P and form 5-P. 2 positions are modified to phosphoserine; in form 1-P, form 2-P, form 3-P, form 4-P and form 5-P: serine 24 and serine 25.

It belongs to the beta-casein family. In terms of processing, form 1-P is phosphorylated once; half of the molecules are phosphorylated on Ser-24, half on Ser-25. As to expression, mammary gland specific. Secreted in milk.

It localises to the secreted. Functionally, important role in determination of the surface properties of the casein micelles. This is Beta-casein (CSN2) from Homo sapiens (Human).